A 260-amino-acid polypeptide reads, in one-letter code: Proteasome subunit alpha (260 aa).

Residues 237-248 (ASTDAPAAAADS) show a composition bias toward low complexity. The segment at 237–260 (ASTDAPAAAADSADVEERPDSEAP) is disordered. Over residues 251 to 260 (VEERPDSEAP) the composition is skewed to basic and acidic residues.

It belongs to the peptidase T1A family. The 20S proteasome core is composed of 14 alpha and 14 beta subunits that assemble into four stacked heptameric rings, resulting in a barrel-shaped structure. The two inner rings, each composed of seven catalytic beta subunits, are sandwiched by two outer rings, each composed of seven alpha subunits. The catalytic chamber with the active sites is on the inside of the barrel. Has a gated structure, the ends of the cylinder being occluded by the N-termini of the alpha-subunits. Is capped by the proteasome-associated ATPase, ARC.

Its subcellular location is the cytoplasm. It functions in the pathway protein degradation; proteasomal Pup-dependent pathway. Its activity is regulated as follows. The formation of the proteasomal ATPase ARC-20S proteasome complex, likely via the docking of the C-termini of ARC into the intersubunit pockets in the alpha-rings, may trigger opening of the gate for substrate entry. Interconversion between the open-gate and close-gate conformations leads to a dynamic regulation of the 20S proteasome proteolysis activity. In terms of biological role, component of the proteasome core, a large protease complex with broad specificity involved in protein degradation. In Salinispora tropica (strain ATCC BAA-916 / DSM 44818 / JCM 13857 / NBRC 105044 / CNB-440), this protein is Proteasome subunit alpha.